Here is a 353-residue protein sequence, read N- to C-terminus: UPF0283 membrane protein Spro_2618 (353 aa).

A run of 3 helical transmembrane segments spans residues 71 to 91, 101 to 121, and 214 to 234; these read MVTA…VQWV, IAMG…GSVV, and ESTL…FIAW.

Belongs to the UPF0283 family.

The protein localises to the cell inner membrane. The protein is UPF0283 membrane protein Spro_2618 of Serratia proteamaculans (strain 568).